The chain runs to 243 residues: Phosphoadenosine 5'-phosphosulfate reductase (243 aa).

Cys239 (nucleophile; cysteine thiosulfonate intermediate) is an active-site residue.

The protein belongs to the PAPS reductase family. CysH subfamily.

Its subcellular location is the cytoplasm. It carries out the reaction [thioredoxin]-disulfide + sulfite + adenosine 3',5'-bisphosphate + 2 H(+) = [thioredoxin]-dithiol + 3'-phosphoadenylyl sulfate. It functions in the pathway sulfur metabolism; hydrogen sulfide biosynthesis; sulfite from sulfate: step 3/3. Functionally, catalyzes the formation of sulfite from phosphoadenosine 5'-phosphosulfate (PAPS) using thioredoxin as an electron donor. This is Phosphoadenosine 5'-phosphosulfate reductase from Erwinia tasmaniensis (strain DSM 17950 / CFBP 7177 / CIP 109463 / NCPPB 4357 / Et1/99).